A 413-amino-acid chain; its full sequence is Calmodulin-binding protein CmbB (413 aa).

FNIP repeat units lie at residues phenylalanine 104 to cysteine 148, tyrosine 149 to glycine 192, serine 222 to glycine 257, phenylalanine 258 to phenylalanine 301, phenylalanine 304 to lysine 343, and tyrosine 344 to tyrosine 386.

As to quaternary structure, interacts with calmodulin in the presence of Ca(2+).

In Dictyostelium discoideum (Social amoeba), this protein is Calmodulin-binding protein CmbB.